A 298-amino-acid polypeptide reads, in one-letter code: 4-hydroxy-tetrahydrodipicolinate synthase (298 aa).

T48 contacts pyruvate. Y137 (proton donor/acceptor) is an active-site residue. Catalysis depends on K166, which acts as the Schiff-base intermediate with substrate. Residue I207 participates in pyruvate binding.

This sequence belongs to the DapA family. In terms of assembly, homotetramer; dimer of dimers.

The protein resides in the cytoplasm. It carries out the reaction L-aspartate 4-semialdehyde + pyruvate = (2S,4S)-4-hydroxy-2,3,4,5-tetrahydrodipicolinate + H2O + H(+). It functions in the pathway amino-acid biosynthesis; L-lysine biosynthesis via DAP pathway; (S)-tetrahydrodipicolinate from L-aspartate: step 3/4. Functionally, catalyzes the condensation of (S)-aspartate-beta-semialdehyde [(S)-ASA] and pyruvate to 4-hydroxy-tetrahydrodipicolinate (HTPA). This is 4-hydroxy-tetrahydrodipicolinate synthase from Campylobacter jejuni subsp. jejuni serotype O:23/36 (strain 81-176).